Here is a 210-residue protein sequence, read N- to C-terminus: MRVKICGITQPQQSVAIASLGATALGFICVPSSPRYVTAAQIWAAVAPLPKNIDKIGVFANSSIAEIKQTVIDCGLTGVQLHGDETPEFCDQLRRSLPQVEILKALRVRSLEHLEQAIIYTQYINTLLLDAYHPQQLGGTGQTLDWQMLHKFHPSCPWLLAGGLTPDNILEALSQLNPDGIDLSSGVERKPGDKDLDKVALLFEKLGSRN.

Belongs to the TrpF family.

It catalyses the reaction N-(5-phospho-beta-D-ribosyl)anthranilate = 1-(2-carboxyphenylamino)-1-deoxy-D-ribulose 5-phosphate. It functions in the pathway amino-acid biosynthesis; L-tryptophan biosynthesis; L-tryptophan from chorismate: step 3/5. The protein is N-(5'-phosphoribosyl)anthranilate isomerase of Trichormus variabilis (strain ATCC 29413 / PCC 7937) (Anabaena variabilis).